A 390-amino-acid polypeptide reads, in one-letter code: 1-deoxy-D-xylulose 5-phosphate reductoisomerase (390 aa).

Positions 18, 19, 20, 21, and 130 each coordinate NADPH. 1-deoxy-D-xylulose 5-phosphate is bound at residue lysine 131. An NADPH-binding site is contributed by glutamate 132. Residue aspartate 156 participates in Mn(2+) binding. Positions 157, 158, 182, and 205 each coordinate 1-deoxy-D-xylulose 5-phosphate. Glutamate 158 is a Mn(2+) binding site. An NADPH-binding site is contributed by glycine 211. The 1-deoxy-D-xylulose 5-phosphate site is built by serine 218, asparagine 223, lysine 224, and glutamate 227. Glutamate 227 contacts Mn(2+).

Belongs to the DXR family. It depends on Mg(2+) as a cofactor. Mn(2+) is required as a cofactor.

It catalyses the reaction 2-C-methyl-D-erythritol 4-phosphate + NADP(+) = 1-deoxy-D-xylulose 5-phosphate + NADPH + H(+). Its pathway is isoprenoid biosynthesis; isopentenyl diphosphate biosynthesis via DXP pathway; isopentenyl diphosphate from 1-deoxy-D-xylulose 5-phosphate: step 1/6. Functionally, catalyzes the NADPH-dependent rearrangement and reduction of 1-deoxy-D-xylulose-5-phosphate (DXP) to 2-C-methyl-D-erythritol 4-phosphate (MEP). In Bacteroides thetaiotaomicron (strain ATCC 29148 / DSM 2079 / JCM 5827 / CCUG 10774 / NCTC 10582 / VPI-5482 / E50), this protein is 1-deoxy-D-xylulose 5-phosphate reductoisomerase.